A 131-amino-acid polypeptide reads, in one-letter code: Two-component response regulator ORR3 (131 aa).

The region spanning 12–129 is the Response regulatory domain; the sequence is HVLAVDDSIV…DVSRLCNRVI (118 aa). D62 bears the 4-aspartylphosphate mark.

Belongs to the ARR family. Type-A subfamily. In terms of processing, two-component system major event consists of a His-to-Asp phosphorelay between a sensor histidine kinase (HK) and a response regulator (RR). In plants, the His-to-Asp phosphorelay involves an additional intermediate named Histidine-containing phosphotransfer protein (HPt). This multistep phosphorelay consists of a His-Asp-His-Asp sequential transfer of a phosphate group between first a His and an Asp of the HK protein, followed by the transfer to a conserved His of the HPt protein and finally the transfer to an Asp in the receiver domain of the RR protein. Expressed in roots, mature leaves and flowers, and at low levels in shoots.

Functions as a response regulator involved in His-to-Asp phosphorelay signal transduction system. Phosphorylation of the Asp residue in the receiver domain activates the ability of the protein to promote the transcription of target genes. Type-A response regulators seem to act as negative regulators of the cytokinin signaling. The protein is Two-component response regulator ORR3 of Oryza sativa subsp. indica (Rice).